The sequence spans 232 residues: Phosphoribosylformylglycinamidine synthase subunit PurQ (232 aa).

The Glutamine amidotransferase type-1 domain maps to 2–232 (KIAIIQFGGT…SMADYITENF (231 aa)). The active-site Nucleophile is Cys-86. Residues His-203 and Glu-205 contribute to the active site.

Part of the FGAM synthase complex composed of 1 PurL, 1 PurQ and 2 PurS subunits.

Its subcellular location is the cytoplasm. The catalysed reaction is N(2)-formyl-N(1)-(5-phospho-beta-D-ribosyl)glycinamide + L-glutamine + ATP + H2O = 2-formamido-N(1)-(5-O-phospho-beta-D-ribosyl)acetamidine + L-glutamate + ADP + phosphate + H(+). The enzyme catalyses L-glutamine + H2O = L-glutamate + NH4(+). It participates in purine metabolism; IMP biosynthesis via de novo pathway; 5-amino-1-(5-phospho-D-ribosyl)imidazole from N(2)-formyl-N(1)-(5-phospho-D-ribosyl)glycinamide: step 1/2. In terms of biological role, part of the phosphoribosylformylglycinamidine synthase complex involved in the purines biosynthetic pathway. Catalyzes the ATP-dependent conversion of formylglycinamide ribonucleotide (FGAR) and glutamine to yield formylglycinamidine ribonucleotide (FGAM) and glutamate. The FGAM synthase complex is composed of three subunits. PurQ produces an ammonia molecule by converting glutamine to glutamate. PurL transfers the ammonia molecule to FGAR to form FGAM in an ATP-dependent manner. PurS interacts with PurQ and PurL and is thought to assist in the transfer of the ammonia molecule from PurQ to PurL. This chain is Phosphoribosylformylglycinamidine synthase subunit PurQ, found in Methanosarcina mazei (strain ATCC BAA-159 / DSM 3647 / Goe1 / Go1 / JCM 11833 / OCM 88) (Methanosarcina frisia).